Consider the following 595-residue polypeptide: MNDLIKHKLELLPSNPGCYLHKDKFGNIIYVGKAKNLKNRVRSYFRGSHDTKTELLVSEIADFEFIVTESNIEALLLEINLIQENMPKFNIRLKDGKSYPFIKITKELYPRLLITRQVKKDGGLYFGPYPDAGAANEIKKLLDRIFPFKKCKNPANKVCFYYHIGQCKAHTICHTTEAYWQGLVEDVKNFLNGHDDKIVNQLKAKMKDMSDQMEFERAAEYRDLIEAVSTLRTKQRVIRQDMQDRDIFGYYVDKGWMCVQVFFVRQGKLIQRDVNMFPYYNDAEEDFLTYMGQFYLDSRHLKPKEIFIPGDIDQESVEALVGDEVKVFKPQRGEKKQLVNLATKNARVSLTQKFDLLEKDIAKTQGAIENLGKLMGIPTPVRIESFDNSNIMGTSPVSAMVVFENGKPNKKEYRKYKIKTVEGPDDYASMREVIRRRYSRVKRDGLTPPDLIIIDGGQGQVNVAKDVLRNELNLSIPVAGLQKNDKHQTNELLFGDPLRVIDLPRQSEEFFLLHRIQDEVHRFAITFHRQVRSKNSFSSKLDGVEGLGPKRKQKLLKNFKSMTAIQQASVEDIQALGIPEKVAQALLDKLSQDSH.

A GIY-YIG domain is found at 14–91 (SNPGCYLHKD…IQENMPKFNI (78 aa)). A UVR domain is found at 196–231 (DKIVNQLKAKMKDMSDQMEFERAAEYRDLIEAVSTL).

The protein belongs to the UvrC family. Interacts with UvrB in an incision complex.

It localises to the cytoplasm. In terms of biological role, the UvrABC repair system catalyzes the recognition and processing of DNA lesions. UvrC both incises the 5' and 3' sides of the lesion. The N-terminal half is responsible for the 3' incision and the C-terminal half is responsible for the 5' incision. This chain is UvrABC system protein C, found in Streptococcus thermophilus (strain CNRZ 1066).